The primary structure comprises 91 residues: Ribonuclease P protein component 4 (91 aa).

Residues cysteine 55, cysteine 58, cysteine 78, and cysteine 81 each coordinate Zn(2+).

This sequence belongs to the eukaryotic/archaeal RNase P protein component 4 family. Consists of a catalytic RNA component and at least 4-5 protein subunits. Zn(2+) serves as cofactor.

It is found in the cytoplasm. The catalysed reaction is Endonucleolytic cleavage of RNA, removing 5'-extranucleotides from tRNA precursor.. Functionally, part of ribonuclease P, a protein complex that generates mature tRNA molecules by cleaving their 5'-ends. The sequence is that of Ribonuclease P protein component 4 from Thermoplasma acidophilum (strain ATCC 25905 / DSM 1728 / JCM 9062 / NBRC 15155 / AMRC-C165).